Here is a 213-residue protein sequence, read N- to C-terminus: Endonuclease III (213 aa).

One can recognise a HhH domain in the interval 101 to 120 (LEELLKLPGVGRKTANIVLW). Cys-180, Cys-187, Cys-190, and Cys-196 together coordinate [4Fe-4S] cluster.

It belongs to the Nth/MutY family. [4Fe-4S] cluster is required as a cofactor.

The catalysed reaction is 2'-deoxyribonucleotide-(2'-deoxyribose 5'-phosphate)-2'-deoxyribonucleotide-DNA = a 3'-end 2'-deoxyribonucleotide-(2,3-dehydro-2,3-deoxyribose 5'-phosphate)-DNA + a 5'-end 5'-phospho-2'-deoxyribonucleoside-DNA + H(+). Functionally, DNA repair enzyme that has both DNA N-glycosylase activity and AP-lyase activity. The DNA N-glycosylase activity releases various damaged pyrimidines from DNA by cleaving the N-glycosidic bond, leaving an AP (apurinic/apyrimidinic) site. The AP-lyase activity cleaves the phosphodiester bond 3' to the AP site by a beta-elimination, leaving a 3'-terminal unsaturated sugar and a product with a terminal 5'-phosphate. This is Endonuclease III from Thermotoga maritima (strain ATCC 43589 / DSM 3109 / JCM 10099 / NBRC 100826 / MSB8).